The sequence spans 249 residues: Probable septum site-determining protein MinC (249 aa).

The interval 116–149 (AAVSPPPPPPPPPARAEPAAPVARPAPGRMQRNA) is disordered. The segment covering 119-130 (SPPPPPPPPPAR) has biased composition (pro residues). Over residues 131 to 142 (AEPAAPVARPAP) the composition is skewed to low complexity.

Belongs to the MinC family. As to quaternary structure, interacts with MinD and FtsZ.

Cell division inhibitor that blocks the formation of polar Z ring septums. Rapidly oscillates between the poles of the cell to destabilize FtsZ filaments that have formed before they mature into polar Z rings. Prevents FtsZ polymerization. In Xanthomonas campestris pv. campestris (strain B100), this protein is Probable septum site-determining protein MinC.